Reading from the N-terminus, the 1460-residue chain is DNA-directed RNA polymerase III subunit RPC1 (1460 aa).

Cys-67, Cys-70, Cys-77, His-80, Cys-107, Cys-110, and Cys-154 together coordinate Zn(2+). Residues Asp-511, Asp-513, and Asp-515 each coordinate Mg(2+). The bridging helix stretch occupies residues 858-870; sequence PPEFLFHAISGRE.

It belongs to the RNA polymerase beta' chain family. Component of the RNA polymerase III (Pol III) complex consisting of 17 subunits.

Its subcellular location is the nucleus. The enzyme catalyses RNA(n) + a ribonucleoside 5'-triphosphate = RNA(n+1) + diphosphate. Functionally, DNA-dependent RNA polymerase catalyzes the transcription of DNA into RNA using the four ribonucleoside triphosphates as substrates. Largest and catalytic core component of RNA polymerase III which synthesizes small RNAs, such as 5S rRNA and tRNAs. Forms the polymerase active center together with the second largest subunit. A single-stranded DNA template strand of the promoter is positioned within the central active site cleft of Pol III. A bridging helix emanates from RPC1 and crosses the cleft near the catalytic site and is thought to promote translocation of Pol III by acting as a ratchet that moves the RNA-DNA hybrid through the active site by switching from straight to bent conformations at each step of nucleotide addition. The polypeptide is DNA-directed RNA polymerase III subunit RPC1 (RPO31) (Saccharomyces cerevisiae (strain ATCC 204508 / S288c) (Baker's yeast)).